The sequence spans 369 residues: Anhydro-N-acetylmuramic acid kinase (369 aa).

12–19 (GTSLDGVD) contributes to the ATP binding site.

It belongs to the anhydro-N-acetylmuramic acid kinase family.

It carries out the reaction 1,6-anhydro-N-acetyl-beta-muramate + ATP + H2O = N-acetyl-D-muramate 6-phosphate + ADP + H(+). It functions in the pathway amino-sugar metabolism; 1,6-anhydro-N-acetylmuramate degradation. The protein operates within cell wall biogenesis; peptidoglycan recycling. Functionally, catalyzes the specific phosphorylation of 1,6-anhydro-N-acetylmuramic acid (anhMurNAc) with the simultaneous cleavage of the 1,6-anhydro ring, generating MurNAc-6-P. Is required for the utilization of anhMurNAc either imported from the medium or derived from its own cell wall murein, and thus plays a role in cell wall recycling. The chain is Anhydro-N-acetylmuramic acid kinase from Actinobacillus pleuropneumoniae serotype 3 (strain JL03).